The following is a 353-amino-acid chain: 2-oxoglutarate-dependent dioxygenase phqC (353 aa).

The region spanning 199-315 (CASELRLNNY…RRSCAFFLKA (117 aa)) is the Fe2OG dioxygenase domain. Fe cation-binding residues include histidine 227, aspartate 229, and histidine 287. Residue arginine 302 coordinates 2-oxoglutarate.

Belongs to the iron/ascorbate-dependent oxidoreductase family. It depends on Fe(2+) as a cofactor.

The protein operates within alkaloid biosynthesis. Its function is as follows. 2-oxoglutarate-dependent dioxygenase; part of the gene cluster that mediates the biosynthesis of paraherquamide, a fungal indole alkaloid that belongs to a family of natural products containing a characteristic bicyclo[2.2.2]diazaoctane core. The first steps in the biosynthesis of paraherquamide is the production of the beta-methyl-proline precursor from L-isoleucine. They require oxidation of a terminally hydroxylated L-isoleucine to the corresponding aldehyde by enzymes which have still to be identified. Spontaneous cyclization and dehydration would yield the 4-methyl pyrolline-5-carboxylic acid, which is then reduced by the pyrroline-5-carboxylate reductase phqD leading to the beta-methyl-proline precursor. The next step of paraherquamide biosynthesis involves coupling of beta-methyl-proline and L-tryptophan by the bimodular NRPS phqB, to produce a monooxopiperazine intermediate. The reductase (R) domain of phqB utilizes NADPH for hydride transfer to reduce the thioester bond of the T domain-tethered linear dipeptide to a hemithioaminal intermediate, which spontaneously cleaves the C-S bond to release the aldehyde product. This compound undergoes spontaneous cyclization and dehydration to give a dienamine which is reverse prenylated at C-2 by the reverse prenyltransferase phqJ. The other prenyltransferase present in the cluster, phqI may be a redundant gene in the pathway. During biosynthetic assembly, the key step to produce the polycyclic core is catalyzed by the bifunctional reductase and intramolecular [4+2] Diels-Alderase, phqE, resulting in formation of the [2.2.2] diazaoctane intermediate preparaherquamide. Following formation of preparaherquamide, an indole 2,3-epoxidation-initiated pinacol-like rearrangement is catalyzed by the phqK FAD-dependent monooxygenase. The prenyltransferase phqA, the cytochrome P450 monooxygenase phqL, and the FAD-linked oxidoreductase phqH (or the cytochrome P450 monooxygenase phqM), are proposed to be involved in the formation of the pyran ring. The FAD-dependent monooxygenase phqK is likely responsible for generation of the spiro-oxindole, and the N-methylation is likely mediated by the phqN methyltransferase leading to the isolable natural product paraherquamide F. However, the order of these biosynthetic steps has still to be determined. In late-stage paraherquamide biosynthesis, the third P450 monooxygenase, phqO, is probably responsible for the C-14 hydroxylation, transforming paraherquamide F to paraherquamide G, and paraherquamide E to the final product paraherquamide A. The expansion from the 6-membered ring pyran (in paraherquamides F and G) to the 7-membered dioxepin ring (in paraherquamides A and E) represents a poorly understood but intriguing process that probably involves the 2-oxoglutarate-dependent dioxygenase phqC. Finally, the remaining members of the paraherquamide cluster, including phqI as well as phqM (or phqH), do not have a clearly prescribed role and appear to be redundant. The protein is 2-oxoglutarate-dependent dioxygenase phqC of Penicillium fellutanum.